The chain runs to 306 residues: Ornithine carbamoyltransferase (306 aa).

Carbamoyl phosphate-binding positions include 51 to 54 (STRT), Gln-78, Arg-102, and 129 to 132 (HPCQ). L-ornithine contacts are provided by residues Asn-160, Asp-223, and 227–228 (SM). Carbamoyl phosphate contacts are provided by residues 263–264 (CL) and Arg-291.

The protein belongs to the aspartate/ornithine carbamoyltransferase superfamily. OTCase family.

It localises to the cytoplasm. It carries out the reaction carbamoyl phosphate + L-ornithine = L-citrulline + phosphate + H(+). Its pathway is amino-acid biosynthesis; L-arginine biosynthesis; L-arginine from L-ornithine and carbamoyl phosphate: step 1/3. In terms of biological role, reversibly catalyzes the transfer of the carbamoyl group from carbamoyl phosphate (CP) to the N(epsilon) atom of ornithine (ORN) to produce L-citrulline. This chain is Ornithine carbamoyltransferase, found in Nostoc sp. (strain PCC 7120 / SAG 25.82 / UTEX 2576).